The sequence spans 437 residues: RING finger protein 150 (437 aa).

The first 34 residues, 1 to 34 (MTMSLIQACRSLALSTWLLSFCFVHLLCLDFTVA), serve as a signal peptide directing secretion. Topologically, residues 35–207 (EKEEWYTAFV…NLQKYVSRTS (173 aa)) are extracellular. Asparagine 45, asparagine 124, asparagine 152, and asparagine 185 each carry an N-linked (GlcNAc...) asparagine glycan. The PA domain occupies 80–182 (SPKQDARGEV…PKGKEIVSLL (103 aa)). A helical membrane pass occupies residues 208–228 (VVFVSISFIVLMIISLAWLVF). The Cytoplasmic portion of the chain corresponds to 229-437 (YYIQRFRYAN…TDQDCEEVKS (209 aa)). An RING-type; atypical zinc finger spans residues 277 to 318 (CAVCIEGYKPNDVVRILPCRHLFHKSCVDPWLLDHRTCPMCK).

It localises to the membrane. The sequence is that of RING finger protein 150 (Rnf150) from Mus musculus (Mouse).